The sequence spans 376 residues: Chaperone protein DnaJ (376 aa).

Residues 5–69 (DYYEILGVDR…EKRARYDRFG (65 aa)) enclose the J domain. The CR-type zinc finger occupies 135–217 (GLETDIRVPH…CNGKGVVRKT (83 aa)). Residues Cys-148, Cys-151, Cys-165, Cys-168, Cys-191, Cys-194, Cys-205, and Cys-208 each coordinate Zn(2+). CXXCXGXG motif repeat units lie at residues 148–155 (CPVCHGSR), 165–172 (CQTCGGSG), 191–198 (CPDCQGEG), and 205–212 (CSNCNGKG).

The protein belongs to the DnaJ family. Homodimer. Zn(2+) serves as cofactor.

The protein localises to the cytoplasm. Participates actively in the response to hyperosmotic and heat shock by preventing the aggregation of stress-denatured proteins and by disaggregating proteins, also in an autonomous, DnaK-independent fashion. Unfolded proteins bind initially to DnaJ; upon interaction with the DnaJ-bound protein, DnaK hydrolyzes its bound ATP, resulting in the formation of a stable complex. GrpE releases ADP from DnaK; ATP binding to DnaK triggers the release of the substrate protein, thus completing the reaction cycle. Several rounds of ATP-dependent interactions between DnaJ, DnaK and GrpE are required for fully efficient folding. Also involved, together with DnaK and GrpE, in the DNA replication of plasmids through activation of initiation proteins. This is Chaperone protein DnaJ from Methanothermobacter thermautotrophicus (strain ATCC 29096 / DSM 1053 / JCM 10044 / NBRC 100330 / Delta H) (Methanobacterium thermoautotrophicum).